A 194-amino-acid polypeptide reads, in one-letter code: GTP cyclohydrolase 1 (194 aa).

Residues Cys-83, His-86, and Cys-155 each contribute to the Zn(2+) site.

The protein belongs to the GTP cyclohydrolase I family. Homomer.

The enzyme catalyses GTP + H2O = 7,8-dihydroneopterin 3'-triphosphate + formate + H(+). The protein operates within cofactor biosynthesis; 7,8-dihydroneopterin triphosphate biosynthesis; 7,8-dihydroneopterin triphosphate from GTP: step 1/1. This is GTP cyclohydrolase 1 from Streptococcus pyogenes serotype M49 (strain NZ131).